A 360-amino-acid polypeptide reads, in one-letter code: Peptide chain release factor 1 (360 aa).

Glutamine 235 is subject to N5-methylglutamine. Basic and acidic residues predominate over residues 284–295 (ERQEQAQADTRR). The disordered stretch occupies residues 284-309 (ERQEQAQADTRRNLLGSGDRSDKIRT).

The protein belongs to the prokaryotic/mitochondrial release factor family. In terms of processing, methylated by PrmC. Methylation increases the termination efficiency of RF1.

The protein localises to the cytoplasm. Functionally, peptide chain release factor 1 directs the termination of translation in response to the peptide chain termination codons UAG and UAA. The polypeptide is Peptide chain release factor 1 (prfA) (Pasteurella multocida (strain Pm70)).